The sequence spans 120 residues: uncharacterized protein (120 aa).

The next 3 membrane-spanning stretches (helical) occupy residues 24-44, 61-81, and 86-106; these read ALLG…ALCY, IGVV…NLAV, and PLGK…GIVV.

To M.leprae ML1176.

It localises to the cell membrane. This is an uncharacterized protein from Mycobacterium bovis (strain ATCC BAA-935 / AF2122/97).